The sequence spans 1185 residues: Liprin-alpha-4 (1185 aa).

2 coiled-coil regions span residues Ala24–Ser123 and Asp165–Gly499. 2 disordered regions span residues Ser638–Arg709 and Glu721–Ile757. Position 640 is a phosphoserine (Ser640). Over residues Gly645 to Ala656 the composition is skewed to polar residues. A Phosphoserine modification is found at Ser681. Positions Ser684–Ile695 are enriched in basic and acidic residues. A compositionally biased stretch (low complexity) spans Asp729 to Asp742. 3 SAM domains span residues Trp829–Leu895, Asn944–Leu1008, and Trp1032–Leu1101.

Belongs to the liprin family. Liprin-alpha subfamily. As to quaternary structure, forms homodimers and heterodimers with liprins-alpha and liprins-beta. Interacts with the second PTPase domain of PTPRD, PTPRF and PTPRS. Interacts with RIMS1 and RIMS2. Interacts with GIT1 and GIT2. Interacts with GRIP1. Interacts with KIF1A. In terms of tissue distribution, expressed only in the heart, brain, and skeletal muscle.

It is found in the cytoplasm. The protein localises to the cell surface. May regulate the disassembly of focal adhesions. May localize receptor-like tyrosine phosphatases type 2A at specific sites on the plasma membrane, possibly regulating their interaction with the extracellular environment and their association with substrates. The polypeptide is Liprin-alpha-4 (PPFIA4) (Homo sapiens (Human)).